The primary structure comprises 322 residues: 2-methylene-furan-3-one reductase (322 aa).

Residues lysine 59, 174-175 (GV), 197-200 (STKK), tyrosine 215, isoleucine 253, 264-266 (FVL), and 311-312 (RA) each bind NADP(+). Position 59 (lysine 59) interacts with substrate.

The protein belongs to the zinc-containing alcohol dehydrogenase family. Quinone oxidoreductase subfamily. Monomer.

It catalyses the reaction 4-hydroxy-2,5-dimethyl-furan-3(2H)-one + NADP(+) = 4-hydroxy-5-methyl-2-methylenefuran-3(2H)-one + NADPH + H(+). In terms of biological role, enone oxidoreductase involved in the biosynthesis of 4-hydroxy-2,5-dimethyl-3(2H)-furanone (HDMF or furaneol), the key flavor compound in strawberries. This Fragaria vesca (Woodland strawberry) protein is 2-methylene-furan-3-one reductase (EO).